Reading from the N-terminus, the 211-residue chain is ATP phosphoribosyltransferase (211 aa).

Belongs to the ATP phosphoribosyltransferase family. Short subfamily. Heteromultimer composed of HisG and HisZ subunits.

It localises to the cytoplasm. It carries out the reaction 1-(5-phospho-beta-D-ribosyl)-ATP + diphosphate = 5-phospho-alpha-D-ribose 1-diphosphate + ATP. The protein operates within amino-acid biosynthesis; L-histidine biosynthesis; L-histidine from 5-phospho-alpha-D-ribose 1-diphosphate: step 1/9. Its function is as follows. Catalyzes the condensation of ATP and 5-phosphoribose 1-diphosphate to form N'-(5'-phosphoribosyl)-ATP (PR-ATP). Has a crucial role in the pathway because the rate of histidine biosynthesis seems to be controlled primarily by regulation of HisG enzymatic activity. This Pseudomonas fluorescens (strain ATCC BAA-477 / NRRL B-23932 / Pf-5) protein is ATP phosphoribosyltransferase.